Reading from the N-terminus, the 297-residue chain is Nucleotide-binding protein CJA_2809 (297 aa).

8–15 (GLSGSGKT) is an ATP binding site. 59 to 62 (DVRN) is a GTP binding site.

It belongs to the RapZ-like family.

Functionally, displays ATPase and GTPase activities. In Cellvibrio japonicus (strain Ueda107) (Pseudomonas fluorescens subsp. cellulosa), this protein is Nucleotide-binding protein CJA_2809.